A 528-amino-acid chain; its full sequence is T-complex protein 1 subunit gamma (528 aa).

Position 250 is a phosphoserine (serine 250). Cysteine 364 and cysteine 370 form a disulfide bridge.

Belongs to the TCP-1 chaperonin family. As to quaternary structure, heterooligomeric complex of about 850 to 900 kDa that forms two stacked rings, 12 to 16 nm in diameter.

It is found in the cytoplasm. Functionally, molecular chaperone; assists the folding of proteins upon ATP hydrolysis. Known to play a role, in vitro, in the folding of actin and tubulin. In Schizosaccharomyces pombe (strain 972 / ATCC 24843) (Fission yeast), this protein is T-complex protein 1 subunit gamma (cct3).